A 619-amino-acid polypeptide reads, in one-letter code: tRNA uridine 5-carboxymethylaminomethyl modification enzyme MnmG (619 aa).

FAD is bound by residues Gly14–Gly19, Val126, and Ser181. Position 273–287 (Gly273–Phe287) interacts with NAD(+). An FAD-binding site is contributed by Gln370.

The protein belongs to the MnmG family. Homodimer. Heterotetramer of two MnmE and two MnmG subunits. It depends on FAD as a cofactor.

It localises to the cytoplasm. NAD-binding protein involved in the addition of a carboxymethylaminomethyl (cmnm) group at the wobble position (U34) of certain tRNAs, forming tRNA-cmnm(5)s(2)U34. The protein is tRNA uridine 5-carboxymethylaminomethyl modification enzyme MnmG of Syntrophotalea carbinolica (strain DSM 2380 / NBRC 103641 / GraBd1) (Pelobacter carbinolicus).